A 150-amino-acid polypeptide reads, in one-letter code: Deoxyuridine 5'-triphosphate nucleotidohydrolase (150 aa).

Residues Arg67–Ser69, Asn80, and Val84–Asp86 contribute to the substrate site.

Belongs to the dUTPase family. The cofactor is Mg(2+).

It carries out the reaction dUTP + H2O = dUMP + diphosphate + H(+). It functions in the pathway pyrimidine metabolism; dUMP biosynthesis; dUMP from dCTP (dUTP route): step 2/2. In terms of biological role, this enzyme is involved in nucleotide metabolism: it produces dUMP, the immediate precursor of thymidine nucleotides and it decreases the intracellular concentration of dUTP so that uracil cannot be incorporated into DNA. The protein is Deoxyuridine 5'-triphosphate nucleotidohydrolase (dut) of Lactococcus lactis subsp. lactis (strain IL1403) (Streptococcus lactis).